The primary structure comprises 724 residues: WD repeat-containing protein 91 (724 aa).

Residues 178-207 (FDSEVQRITSLQEDNEQLRQTVFALQGESR) adopt a coiled-coil conformation. The interval 249–365 (SRNFFSTFLP…PDQTDSANQT (117 aa)) is disordered. Composition is skewed to polar residues over residues 270–279 (GPQSSPTQSA) and 303–315 (SVSS…STSH). Phosphoserine is present on Ser-274. The span at 322-333 (QDHEKERKELFS) shows a compositional bias: basic and acidic residues. The span at 349-365 (DTQTEAPPDQTDSANQT) shows a compositional bias: polar residues. 7 WD repeats span residues 389–428 (EHHS…QTKA), 431–471 (MSKS…CLYE), 499–532 (AHSG…QQLQ), 537–576 (PGPV…SALS), 579–618 (AHDG…VKQS), 641–679 (VQVP…AGLE), and 686–724 (GHKA…AQKP).

The protein belongs to the WD repeat WDR91 family.

The protein localises to the early endosome membrane. Its subcellular location is the late endosome membrane. In terms of biological role, functions as a negative regulator of the PI3 kinase/PI3K activity associated with endosomal membranes. By modifying the phosphatidylinositol 3-phosphate/PtdInsP3 content of endosomal membranes may regulate endosome fusion, recycling, sorting and early to late endosome transport. The protein is WD repeat-containing protein 91 (wdr91) of Danio rerio (Zebrafish).